A 570-amino-acid polypeptide reads, in one-letter code: Periplasmic trehalase (570 aa).

Positions 1 to 34 (MIPPEIRRSVLLQKAIKLALAGTLLTFASFSATA) are cleaved as a signal peptide. Residues Arg159, 166-167 (WD), Asn203, 212-214 (RSQ), 284-286 (RPE), and Gly317 contribute to the substrate site. Residues Asp319 and Glu503 each act as proton donor/acceptor in the active site. Glu518 provides a ligand contact to substrate. The disordered stretch occupies residues 544-570 (KPCDSVPSTRPASLSATPTKTPSAATQ). Positions 554-570 (PASLSATPTKTPSAATQ) are enriched in low complexity.

Belongs to the glycosyl hydrolase 37 family. As to quaternary structure, monomer.

Its subcellular location is the periplasm. The enzyme catalyses alpha,alpha-trehalose + H2O = alpha-D-glucose + beta-D-glucose. Provides the cells with the ability to utilize trehalose at high osmolarity by splitting it into glucose molecules that can subsequently be taken up by the phosphotransferase-mediated uptake system. In Salmonella newport (strain SL254), this protein is Periplasmic trehalase.